Consider the following 318-residue polypeptide: NADH-ubiquinone oxidoreductase chain 1 (318 aa).

8 helical membrane-spanning segments follow: residues 2 to 22, 70 to 90, 100 to 120, 136 to 156, 171 to 191, 231 to 251, 253 to 273, and 293 to 313; these read FFINILTLLVPILIAMAFLTL, LFIIAPTLSLTLALSLWVPLP, LGILFILATSSLSVYSILWSG, VAQTISYEVTMAIILLSVLLM, HMWLLLPAWPMAMMWFISTLA, IILMNALTTIIFLGPLYYINL, ELYSTNFMMEALLLSSTFLWI, and FLPLTLALCMWHISLPIFTAG.

Belongs to the complex I subunit 1 family. In terms of assembly, core subunit of respiratory chain NADH dehydrogenase (Complex I) which is composed of 45 different subunits.

It localises to the mitochondrion inner membrane. The catalysed reaction is a ubiquinone + NADH + 5 H(+)(in) = a ubiquinol + NAD(+) + 4 H(+)(out). In terms of biological role, core subunit of the mitochondrial membrane respiratory chain NADH dehydrogenase (Complex I) which catalyzes electron transfer from NADH through the respiratory chain, using ubiquinone as an electron acceptor. Essential for the catalytic activity and assembly of complex I. This chain is NADH-ubiquinone oxidoreductase chain 1 (Mtnd1), found in Mus musculus (Mouse).